We begin with the raw amino-acid sequence, 347 residues long: Selenide, water dikinase (347 aa).

Residue Cys-17 is part of the active site. Residues Lys-20 and 48–50 (TRD) each bind ATP. Asp-51 serves as a coordination point for Mg(2+). Residues Asp-68, Asp-91, and 139–141 (GHS) contribute to the ATP site. Asp-91 lines the Mg(2+) pocket. Asp-227 serves as a coordination point for Mg(2+).

Belongs to the selenophosphate synthase 1 family. Class I subfamily. Homodimer. Mg(2+) is required as a cofactor.

The enzyme catalyses hydrogenselenide + ATP + H2O = selenophosphate + AMP + phosphate + 2 H(+). Its function is as follows. Synthesizes selenophosphate from selenide and ATP. In Escherichia coli O139:H28 (strain E24377A / ETEC), this protein is Selenide, water dikinase.